The sequence spans 363 residues: S-adenosylmethionine:tRNA ribosyltransferase-isomerase (363 aa).

This sequence belongs to the QueA family. Monomer.

It is found in the cytoplasm. It carries out the reaction 7-aminomethyl-7-carbaguanosine(34) in tRNA + S-adenosyl-L-methionine = epoxyqueuosine(34) in tRNA + adenine + L-methionine + 2 H(+). It participates in tRNA modification; tRNA-queuosine biosynthesis. Transfers and isomerizes the ribose moiety from AdoMet to the 7-aminomethyl group of 7-deazaguanine (preQ1-tRNA) to give epoxyqueuosine (oQ-tRNA). This is S-adenosylmethionine:tRNA ribosyltransferase-isomerase from Brucella melitensis biotype 2 (strain ATCC 23457).